A 37-amino-acid chain; its full sequence is Protein 6.3 (37 aa).

The sequence is that of Protein 6.3 from Escherichia phage T7 (Bacteriophage T7).